The sequence spans 570 residues: Nucleoprotein (570 aa).

Residues 54-241 (MRKDKRNDSD…IDVSKSSINV (188 aa)) are binding site for the cap structure m7GTP. A disordered region spans residues 342 to 361 (IDLSQNKQMSPAKPKGAGHG). Mn(2+) contacts are provided by Asp-390 and Glu-392. Residues Glu-400, Cys-507, His-510, and Cys-530 each coordinate Zn(2+). Mn(2+) is bound at residue Asp-534.

Belongs to the arenaviridae nucleocapsid protein family. Homomultimerizes to form the nucleocapsid. Binds to viral genomic RNA. Interacts with glycoprotein G2. Interacts with protein Z; this interaction probably directs the encapsidated genome to budding sites. Interacts with protein L; this interaction does not interfere with Z-L interaction. Interacts with host IKBKE (via Protein kinase domain); the interaction inhibits IKBKE kinase activity.

Its subcellular location is the virion. The protein localises to the host cytoplasm. In terms of biological role, encapsidates the genome, protecting it from nucleases. The encapsidated genomic RNA is termed the nucleocapsid (NC). Serves as template for viral transcription and replication. The increased presence of protein N in host cell does not seem to trigger the switch from transcription to replication as observed in other negative strain RNA viruses. Through the interaction with host IKBKE, strongly inhibits the phosphorylation and nuclear translocation of host IRF3, a protein involved in interferon activation pathway, leading to the inhibition of interferon-beta and IRF3-dependent promoters activation. Also encodes a functional 3'-5' exoribonuclease that degrades preferentially dsRNA substrates and thereby participates in the suppression of interferon induction. The sequence is that of Nucleoprotein from Praomys (African soft-furred rats).